An 89-amino-acid chain; its full sequence is Small ribosomal subunit protein uS15 (89 aa).

Belongs to the universal ribosomal protein uS15 family. As to quaternary structure, part of the 30S ribosomal subunit. Forms a bridge to the 50S subunit in the 70S ribosome, contacting the 23S rRNA.

In terms of biological role, one of the primary rRNA binding proteins, it binds directly to 16S rRNA where it helps nucleate assembly of the platform of the 30S subunit by binding and bridging several RNA helices of the 16S rRNA. Its function is as follows. Forms an intersubunit bridge (bridge B4) with the 23S rRNA of the 50S subunit in the ribosome. The protein is Small ribosomal subunit protein uS15 of Nitrosospira multiformis (strain ATCC 25196 / NCIMB 11849 / C 71).